The sequence spans 1979 residues: E3 ubiquitin-protein ligase TTC3 (1979 aa).

An interaction with POLG region spans residues 1–230 (MDDFAEGGLS…RHSCMQCVKQ (230 aa)). TPR repeat units follow at residues 231–264 (GELM…RPEN) and 266–298 (LLYG…KNTW). Serine 378 carries the phosphoserine modification. The interval 422 to 457 (CDCHPEFLPPPSQPPRHKGKQKSRNNESEKPSFNSE) is disordered. TPR repeat units lie at residues 536–572 (VLVV…YPNE) and 576–609 (CLAY…ISRL). The disordered stretch occupies residues 783–811 (LAQERMEEDLRESNPPKNEEPEETSDSAQ). Serine 1009 is subject to Phosphoserine. 7 disordered regions span residues 1021-1067 (NKGK…GPFA), 1214-1289 (QPDV…EEAK), 1402-1427 (QGSA…SSDS), 1574-1601 (KNDG…DEKT), 1757-1776 (MDSA…GSPT), 1788-1821 (KGAS…KKPS), and 1873-1927 (DEQK…PAPD). Positions 1036–1050 (VGSGAASVAPSSEAV) are enriched in low complexity. Serine 1060 bears the Phosphoserine mark. Basic and acidic residues predominate over residues 1214 to 1227 (QPDVKSEALSEDVK). The span at 1248–1257 (DSDSSSGSAS) shows a compositional bias: low complexity. Basic and acidic residues predominate over residues 1576 to 1586 (DGFDKECEPHP). Composition is skewed to polar residues over residues 1788-1799 (KGASQVSPSEQS) and 1808-1821 (GQAT…KKPS). Serine 1794 carries the post-translational modification Phosphoserine. Basic and acidic residues predominate over residues 1873–1890 (DEQKKKKPNPGKDKKTSE). The RING-type; atypical zinc finger occupies 1931–1971 (CEICHEIFKSKNMRVLKCGHKFHKGCFKQWLKGQSTCPTCG).

Interacts (when phosphorylated on Ser-378) with AKT1, AKT2 and AKT3 (when phosphorylated). Interacts with CIT. Interacts with POLG. Interacts with HSP70. Interacts with SMURF2. Phosphorylation on Ser-378 by Akt is required for ubiquitin ligase activity. Post-translationally, proteolytically cleaved into differently sized N- and C-terminal fragments.

Its subcellular location is the nucleus. The protein localises to the cytoplasm. It localises to the golgi apparatus. It carries out the reaction S-ubiquitinyl-[E2 ubiquitin-conjugating enzyme]-L-cysteine + [acceptor protein]-L-lysine = [E2 ubiquitin-conjugating enzyme]-L-cysteine + N(6)-ubiquitinyl-[acceptor protein]-L-lysine.. The protein operates within protein modification; protein ubiquitination. E3 ubiquitin-protein ligase which catalyzes the formation of 'Lys-48'-polyubiquitin chains. Mediates the ubiquitination and subsequent degradation of phosphorylated Akt (AKT1, AKT2 and AKT3) in the nucleus. Acts as a terminal regulator of Akt signaling after activation; its phosphorylation by Akt, which is a prerequisite for ubiquitin ligase activity, suggests the existence of a regulation mechanism required to control Akt levels after activation. Positively regulates TGFB1-induced epithelial-mesenchymal transition and myofibroblast differentiation by mediating the ubiquitination and subsequent degradation of SMURF2. Regulates neuronal differentiation by regulating actin remodeling and Golgi organization via a signaling cascade involving RHOA, CIT and ROCK. Inhibits cell proliferation. This is E3 ubiquitin-protein ligase TTC3 (Ttc3) from Mus musculus (Mouse).